Reading from the N-terminus, the 351-residue chain is 3-ketosteroid-9-alpha-monooxygenase, ferredoxin reductase component (351 aa).

Positions 10 to 116 (SRSVILTVSA…LPPAGVFTPK (107 aa)) constitute an FAD-binding FR-type domain. Residues 264–351 (ATVEVELDGE…PVTDHLKIEF (88 aa)) form the 2Fe-2S ferredoxin-type domain. [2Fe-2S] cluster contacts are provided by Cys-300, Cys-305, Cys-308, and Cys-338.

As to quaternary structure, the two-component system 3-ketosteroid-9-alpha-monooxygenase is composed of an oxygenase component KshA and a reductase component KshB. Requires FAD as cofactor. [2Fe-2S] cluster is required as a cofactor.

The catalysed reaction is androsta-1,4-diene-3,17-dione + 2 reduced [2Fe-2S]-[ferredoxin] + O2 + 2 H(+) = 9alpha-hydroxyandrosta-1,4-diene-3,17-dione + 2 oxidized [2Fe-2S]-[ferredoxin] + H2O. Its pathway is steroid metabolism; cholesterol degradation. Its activity is regulated as follows. KSH activity is completely inhibited by zinc ions. KshB is specifically inhibited by Cu(2+) ions. Probably involved in the degradation of cholesterol. In vitro, catalyzes the introduction of a 9alpha-hydroxyl moiety into the ring B of 3-ketosteroid substrates such as 1,4-androstadiene-3,17-dione (ADD), 4-androstene-3,17-dione (AD), 4-androstene-17beta-ol-3-one (testosterone), 4-pregnene-3,20-dione (progesterone), 19-nor-4-androstene-3,17-dione (nordion), 1-(5alpha)-androstene-3,17-dione, 5alpha-androstane-3,17-dione and 5beta-androstane-3,17-dione. KSH has the highest activity with 3-keto-Delta4 steroid substrates. This chain is 3-ketosteroid-9-alpha-monooxygenase, ferredoxin reductase component, found in Rhodococcus rhodochrous.